A 532-amino-acid polypeptide reads, in one-letter code: L-proline--[L-prolyl-carrier protein] ligase (532 aa).

A disordered region spans residues 510–532 (KTDYRRLGLDAPPRPAAPLGTAR).

The protein belongs to the ATP-dependent AMP-binding enzyme family.

The catalysed reaction is holo-[peptidyl-carrier protein] + L-proline + ATP = L-prolyl-[peptidyl-carrier protein] + AMP + diphosphate. In terms of biological role, involved in the biosynthesis of undecylprodigiosin. Catalyzes the conversion of L-proline to L-prolyl-AMP and the transfer of the L-prolyl group to acyl carrier protein RedO. This Streptomyces coelicolor (strain ATCC BAA-471 / A3(2) / M145) protein is L-proline--[L-prolyl-carrier protein] ligase.